Here is a 508-residue protein sequence, read N- to C-terminus: UBX domain-containing protein 4 (508 aa).

The tract at residues 1–200 (MLWFQGAIPA…PAEDLNIRVE (200 aa)) is interaction with UBQLN1. The Cytoplasmic portion of the chain corresponds to 1–413 (MLWFQGAIPA…VHSSSGDIWT (413 aa)). Polar residues-rich tracts occupy residues 117–151 (SETSVANGSQSESSVSTPSASFEPNNTCENSQSRN) and 160–187 (TSDTKSDTATGGESAGHATSSQEPSGCS). Residues 117 to 196 (SETSVANGSQ…SDQRPAEDLN (80 aa)) form a disordered region. In terms of domain architecture, UBX spans 315-393 (ERSTVARIQF…ELAPSASVVL (79 aa)). Residues 414-434 (LLGTVLYPFLAIWRLISNFLF) lie within the membrane without spanning it. Over 435 to 508 (SNPPPTQTSV…TWNGNSTQQM (74 aa)) the chain is Cytoplasmic. The interval 440–508 (TQTSVRVTSS…TWNGNSTQQM (69 aa)) is disordered. The segment covering 441–458 (QTSVRVTSSEPPNPASSS) has biased composition (polar residues). Positions 459 to 491 (KSEKREPVRKRVLEKRGDDFKKEGKIYRLRTQD) are enriched in basic and acidic residues. A Phosphothreonine modification is found at threonine 489. Over residues 498-508 (NTWNGNSTQQM) the composition is skewed to polar residues.

As to quaternary structure, directly interacts with VCP. Interacts with UBQLN1. Forms a complex with VCP and UBQLN1. Expressed in many tissues, including heart, brain, placenta, lung, liver, skeletal muscle, kidney and pancreas. Accumulates in Alzheimer disease-afflicted brains (at protein level).

The protein localises to the endoplasmic reticulum membrane. Its subcellular location is the nucleus envelope. Functionally, involved in endoplasmic reticulum-associated protein degradation (ERAD). Acts as a platform to recruit both UBQLN1 and VCP to the ER during ERAD. The sequence is that of UBX domain-containing protein 4 (UBXN4) from Homo sapiens (Human).